The following is a 647-amino-acid chain: DNA topoisomerase 4 subunit B (647 aa).

Residues tyrosine 11, asparagine 51, aspartate 78, 118–124, and lysine 344 contribute to the ATP site; that span reads GLHGVGS. Positions 391-401 are enriched in basic and acidic residues; it reads AARKARDESRN. Positions 391–421 are disordered; the sequence is AARKARDESRNGKKNKKDKGLLSGKLTPAQS. Residues 427–541 enclose the Toprim domain; that stretch reads NELYLVEGDS…AGHVYIALPP (115 aa). 3 residues coordinate Mg(2+): glutamate 433, aspartate 506, and aspartate 508.

It belongs to the type II topoisomerase family. ParE type 2 subfamily. As to quaternary structure, heterotetramer composed of ParC and ParE. It depends on Mg(2+) as a cofactor. Mn(2+) serves as cofactor. The cofactor is Ca(2+).

The enzyme catalyses ATP-dependent breakage, passage and rejoining of double-stranded DNA.. With respect to regulation, inhibited by quinolones, such as levofloxacin. Topoisomerase IV is essential for chromosome segregation. It relaxes supercoiled DNA. Performs the decatenation events required during the replication of a circular DNA molecule. The sequence is that of DNA topoisomerase 4 subunit B from Streptococcus pneumoniae serotype 4 (strain ATCC BAA-334 / TIGR4).